The sequence spans 334 residues: MSQSKGKKRNPGLKIPKEAFEQPQTSSTPPRDLDSKACISIGNQNFEVKADDLEPIVELGRGAYGVVEKMRHVPSEQIMAVKRIRATVNSQEQKRLLMDLDISMRTVDCPFTVTFYGALFREGDVWICMELMDTSLDKFYKQVIDKGQTIPEDILGKIAVSIVKALEHLHSKLSVIHRDVKPSNVLINALGQVKMCDFGISGYLVDSVAKTIDAGCKPYMAPERINPELNQKGYSVKSDIWSLGITMIELAILRFPYDSWGTPFQQLKQVVEEPSPQLPADKFSEEFVDFTSQCLKKNSKERPTYPELMQHPFFTLHESKATDVASFVKSILGD.

Positions 1 to 11 (MSQSKGKKRNP) are enriched in basic residues. A disordered region spans residues 1–34 (MSQSKGKKRNPGLKIPKEAFEQPQTSSTPPRDLD). Residues 4–19 (SKGKKRNPGLKIPKEA) are d domain. The region spanning 53 to 314 (LEPIVELGRG…YPELMQHPFF (262 aa)) is the Protein kinase domain. ATP contacts are provided by residues 59-67 (LGRGAYGVV) and Lys82. Asp179 acts as the Proton acceptor in catalysis. Ser207 is modified (phosphoserine; by MAPK3). Thr211 is subject to Phosphothreonine; by MAPK3. Residues 311–334 (HPFFTLHESKATDVASFVKSILGD) form a DVD domain region.

Belongs to the protein kinase superfamily. STE Ser/Thr protein kinase family. MAP kinase kinase subfamily. In terms of assembly, dimer. Interacts (via its D domain) with its substrates MAPK11, MAPK12, MAPK13 and MAPK14. Interacts (via its DVD domain) with MAP3Ks activators like MAP3K5/ASK1, MAP3K1/MEKK1, MAP3K2/MEKK2, MAP3K3/MEKK3, MAP3K4/MEKK4, MAP3K7/TAK1, MAP3K11/MLK3 and MAP3K17/TAOK2. Interacts with DCTN1. Interacts with EIF2AK2/PKR. In terms of processing, weakly autophosphorylated. Phosphorylated at Ser-207 and Thr-211 by the majority of M3Ks, such as MAP3K5/ASK1, MAP3K1/MEKK1, MAP3K2/MEKK2, MAP3K3/MEKK3, MAP3K4/MEKK4, MAP3K7/TAK1, MAP3K11/MLK3 and MAP3K17/TAOK2. In response to genotoxic stress, MAP3K-phosphorylated MAP2K6 is ubiquitinated and degraded by the SCF(FBXO31) complex.

It is found in the nucleus. The protein localises to the cytoplasm. It localises to the cytoskeleton. It catalyses the reaction L-seryl-[protein] + ATP = O-phospho-L-seryl-[protein] + ADP + H(+). The enzyme catalyses L-threonyl-[protein] + ATP = O-phospho-L-threonyl-[protein] + ADP + H(+). The catalysed reaction is L-tyrosyl-[protein] + ATP = O-phospho-L-tyrosyl-[protein] + ADP + H(+). Its activity is regulated as follows. Activated by dual phosphorylation on Ser-207 and Thr-211 in response to a variety of cellular stresses, including UV radiation, osmotic shock, hypoxia, inflammatory cytokines, interferon gamma (IFNG), and less often by growth factors. MAP2K6/MKK6 is activated by the majority of M3Ks, such as MAP3K5/ASK1, MAP3K1/MEKK1, MAP3K2/MEKK2, MAP3K3/MEKK3, MAP3K4/MEKK4, MAP3K7/TAK1, MAP3K11/MLK3 and MAP3K17/TAOK2. In terms of biological role, dual specificity protein kinase which acts as an essential component of the MAP kinase signal transduction pathway. With MAP3K3/MKK3, catalyzes the concomitant phosphorylation of a threonine and a tyrosine residue in the MAP kinases p38 MAPK11, MAPK12, MAPK13 and MAPK14 and plays an important role in the regulation of cellular responses to cytokines and all kinds of stresses. Especially, MAP2K3/MKK3 and MAP2K6/MKK6 are both essential for the activation of MAPK11 and MAPK13 induced by environmental stress, whereas MAP2K6/MKK6 is the major MAPK11 activator in response to TNF. MAP2K6/MKK6 also phosphorylates and activates PAK6. The p38 MAP kinase signal transduction pathway leads to direct activation of transcription factors. Nuclear targets of p38 MAP kinase include the transcription factors ATF2 and ELK1. Within the p38 MAPK signal transduction pathway, MAP3K6/MKK6 mediates phosphorylation of STAT4 through MAPK14 activation, and is therefore required for STAT4 activation and STAT4-regulated gene expression in response to IL-12 stimulation. The pathway is also crucial for IL-6-induced SOCS3 expression and down-regulation of IL-6-mediated gene induction; and for IFNG-dependent gene transcription. Has a role in osteoclast differentiation through NF-kappa-B transactivation by TNFSF11, and in endochondral ossification and since SOX9 is another likely downstream target of the p38 MAPK pathway. MAP2K6/MKK6 mediates apoptotic cell death in thymocytes. Acts also as a regulator for melanocytes dendricity, through the modulation of Rho family GTPases. The polypeptide is Dual specificity mitogen-activated protein kinase kinase 6 (MAP2K6) (Bos taurus (Bovine)).